The chain runs to 358 residues: Chorismate synthase (358 aa).

R47 serves as a coordination point for NADP(+). Residues 124 to 126 (RSS), 240 to 241 (NA), G284, 299 to 303 (KPVAT), and R325 contribute to the FMN site.

This sequence belongs to the chorismate synthase family. In terms of assembly, homotetramer. The cofactor is FMNH2.

The enzyme catalyses 5-O-(1-carboxyvinyl)-3-phosphoshikimate = chorismate + phosphate. It participates in metabolic intermediate biosynthesis; chorismate biosynthesis; chorismate from D-erythrose 4-phosphate and phosphoenolpyruvate: step 7/7. In terms of biological role, catalyzes the anti-1,4-elimination of the C-3 phosphate and the C-6 proR hydrogen from 5-enolpyruvylshikimate-3-phosphate (EPSP) to yield chorismate, which is the branch point compound that serves as the starting substrate for the three terminal pathways of aromatic amino acid biosynthesis. This reaction introduces a second double bond into the aromatic ring system. This is Chorismate synthase from Bacteroides fragilis (strain YCH46).